We begin with the raw amino-acid sequence, 427 residues long: Glycophorin-binding protein-related antigen (427 aa).

GBP repeat units lie at residues 109–149 (LTSA…DELE), 150–189 (TSADPEGQIMKAYAADPEYRKHLNVLYQILNNTDPNDEVE), 190–229 (SSADPEGQIMKAYAADPEYRKHVNVLYQILNNTDPNDELE), 230–269 (TSADPEGQIMKAYAADPEYRKHVNVLYQILNHTDSSEVET), 270–307 (SADPEGQIMKAYAADPEYRKHVNVLYQILNHTDSSEVE), 308–347 (TSADPEGQIMKAYAADPEYRKHVNVLYQILNNTDPNDELE), 348–387 (TSADPEGQIMKAYAADPEYRKHVNVLYQILNNTDPNDELE), and 388–427 (TSADPEGQIMKAYAADPEYRKHVNVLYQILNNTDPNDESS).

This chain is Glycophorin-binding protein-related antigen (GBPH), found in Plasmodium falciparum (isolate FCBR / Columbia).